We begin with the raw amino-acid sequence, 586 residues long: Arrestin-related trafficking adapter 5 (586 aa).

2 disordered regions span residues 123-145 and 182-217; these read GENAENQHNSSSGRSTSNQDMDT and ENGVTGTPFEGLRENARSRSSSSNTLNNNSHSYSNR. A compositionally biased stretch (polar residues) spans 126 to 145; that stretch reads AENQHNSSSGRSTSNQDMDT. The segment covering 199–216 has biased composition (low complexity); the sequence is SRSSSSNTLNNNSHSYSN. Lys-364 is covalently cross-linked (Glycyl lysine isopeptide (Lys-Gly) (interchain with G-Cter in ubiquitin)).

Belongs to the arrestin family. Interacts with RSP5. Ubiquitinated by RSP5.

Functionally, may regulate endocytosis by recruiting RSP5 ubiquitin ligase activity to specific plasma membrane proteins in response to extracellular stimuli. This chain is Arrestin-related trafficking adapter 5 (ART5), found in Saccharomyces cerevisiae (strain ATCC 204508 / S288c) (Baker's yeast).